The sequence spans 282 residues: Nucleotide-binding protein XCC2806 (282 aa).

5 to 12 (GLSGSGKS) contacts ATP. A GTP-binding site is contributed by 57-60 (DVRS).

The protein belongs to the RapZ-like family.

Its function is as follows. Displays ATPase and GTPase activities. The chain is Nucleotide-binding protein XCC2806 from Xanthomonas campestris pv. campestris (strain ATCC 33913 / DSM 3586 / NCPPB 528 / LMG 568 / P 25).